We begin with the raw amino-acid sequence, 147 residues long: NADH-quinone oxidoreductase subunit A (147 aa).

3 helical membrane-spanning segments follow: residues 16-36, 68-88, and 97-117; these read FAIFLIVAIGLCCLMLVGGWF, FYLVAMFFVIFDVEALYLFAW, and WVGFVEAAIFIFVLLAGLVYL.

Belongs to the complex I subunit 3 family. As to quaternary structure, NDH-1 is composed of 13 different subunits. Subunits NuoA, H, J, K, L, M, N constitute the membrane sector of the complex.

Its subcellular location is the cell inner membrane. It carries out the reaction a quinone + NADH + 5 H(+)(in) = a quinol + NAD(+) + 4 H(+)(out). In terms of biological role, NDH-1 shuttles electrons from NADH, via FMN and iron-sulfur (Fe-S) centers, to quinones in the respiratory chain. The immediate electron acceptor for the enzyme in this species is believed to be ubiquinone. Couples the redox reaction to proton translocation (for every two electrons transferred, four hydrogen ions are translocated across the cytoplasmic membrane), and thus conserves the redox energy in a proton gradient. The protein is NADH-quinone oxidoreductase subunit A of Salmonella paratyphi A (strain ATCC 9150 / SARB42).